The chain runs to 94 residues: Late cornified envelope-like proline-rich protein 1 (94 aa).

Disordered regions lie at residues 1 to 26 (MSSD…CEQK) and 47 to 94 (CPRE…PPPE). Residues 53–94 (PAPPKCPPCPSPSPSSCPPKPCAKPCPPKCPSSCPPPCPPPE) are compositionally biased toward pro residues.

The protein belongs to the cornifin (SPRR) family.

This is Late cornified envelope-like proline-rich protein 1 (LELP1) from Macaca fascicularis (Crab-eating macaque).